The following is a 126-amino-acid chain: Thioredoxin-like 3-3 (126 aa).

The segment at 1–24 (MRKQESEGANLEFESKSNDNGNVK) is disordered. One can recognise a Thioredoxin domain in the interval 5 to 126 (ESEGANLEFE…RLHDRLWLHS (122 aa)). Catalysis depends on nucleophile residues Cys-55 and Cys-58. The cysteines at positions 55 and 58 are disulfide-linked.

The protein belongs to the thioredoxin family.

Probable thiol-disulfide oxidoreductase that may participate in various redox reactions. The sequence is that of Thioredoxin-like 3-3 from Arabidopsis thaliana (Mouse-ear cress).